The primary structure comprises 450 residues: Glutamate--tRNA ligase 2 (450 aa).

A 'HIGH' region motif is present at residues 10 to 20 (PSPTGFLHIGG). The 'KMSKS' region motif lies at 232–236 (KLSKR). K235 is an ATP binding site.

The protein belongs to the class-I aminoacyl-tRNA synthetase family. Glutamate--tRNA ligase type 1 subfamily. In terms of assembly, monomer.

The protein localises to the cytoplasm. It catalyses the reaction tRNA(Glu) + L-glutamate + ATP = L-glutamyl-tRNA(Glu) + AMP + diphosphate. Its function is as follows. Catalyzes the attachment of glutamate to tRNA(Glu) in a two-step reaction: glutamate is first activated by ATP to form Glu-AMP and then transferred to the acceptor end of tRNA(Glu). The protein is Glutamate--tRNA ligase 2 of Wolbachia pipientis subsp. Culex pipiens (strain wPip).